We begin with the raw amino-acid sequence, 95 residues long: FXYD domain-containing ion transport regulator 6 (95 aa).

Positions 1-18 (MELVLVFLCSLLAPMVLA) are cleaved as a signal peptide. Over 19 to 35 (SAAEKEKEMDPFHYDYQ) the chain is Extracellular. Residues 36–57 (TLRIGGLVFAVVLFSVGILLIL) traverse the membrane as a helical segment. At 58 to 95 (SRRCKCSFNQKPRAPGDEEAQVENLITANATEPQKAEN) the chain is on the cytoplasmic side. The interval 69-95 (PRAPGDEEAQVENLITANATEPQKAEN) is disordered.

This sequence belongs to the FXYD family. In terms of assembly, regulatory subunit of the sodium/potassium-transporting ATPase which is composed of a catalytic alpha subunit, a non-catalytic beta subunit and an additional regulatory subunit. The regulatory subunit, a member of the FXYD protein family, modulates the enzymatic activity in a tissue- and isoform-specific way by changing affinities of the Na+/K+-ATPase toward Na(+), K(+) or ATP.

It is found in the cell membrane. Associates with and regulates the activity of the sodium/potassium-transporting ATPase (NKA) which catalyzes the hydrolysis of ATP coupled with the exchange of Na(+) and K(+) ions across the plasma membrane. Reduces the apparent affinity for intracellular Na(+) with no change in the apparent affinity for extracellular K(+). In addition to modulating NKA kinetics, may also function as a regulator of NKA localization to the plasma membrane. This chain is FXYD domain-containing ion transport regulator 6, found in Homo sapiens (Human).